A 654-amino-acid polypeptide reads, in one-letter code: Probable Xaa-Pro aminopeptidase P (654 aa).

Mn(2+) contacts are provided by D449, D460, E558, and E572.

It belongs to the peptidase M24B family. Mn(2+) is required as a cofactor.

It carries out the reaction Release of any N-terminal amino acid, including proline, that is linked to proline, even from a dipeptide or tripeptide.. Its function is as follows. Catalyzes the removal of a penultimate prolyl residue from the N-termini of peptides. The chain is Probable Xaa-Pro aminopeptidase P (ampp) from Aspergillus fumigatus (strain CBS 144.89 / FGSC A1163 / CEA10) (Neosartorya fumigata).